Here is a 305-residue protein sequence, read N- to C-terminus: Homoserine O-acetyltransferase (305 aa).

Catalysis depends on cysteine 142, which acts as the Acyl-thioester intermediate. Residues lysine 163 and serine 192 each contribute to the substrate site. The Proton acceptor role is filled by histidine 235. Residue glutamate 237 is part of the active site. Arginine 249 contributes to the substrate binding site.

The protein belongs to the MetA family.

It is found in the cytoplasm. The enzyme catalyses L-homoserine + acetyl-CoA = O-acetyl-L-homoserine + CoA. It functions in the pathway amino-acid biosynthesis; L-methionine biosynthesis via de novo pathway; O-acetyl-L-homoserine from L-homoserine: step 1/1. Functionally, transfers an acetyl group from acetyl-CoA to L-homoserine, forming acetyl-L-homoserine. This Acetivibrio thermocellus (strain ATCC 27405 / DSM 1237 / JCM 9322 / NBRC 103400 / NCIMB 10682 / NRRL B-4536 / VPI 7372) (Clostridium thermocellum) protein is Homoserine O-acetyltransferase.